A 149-amino-acid chain; its full sequence is Large ribosomal subunit protein bL9 (149 aa).

This sequence belongs to the bacterial ribosomal protein bL9 family.

Its function is as follows. Binds to the 23S rRNA. The sequence is that of Large ribosomal subunit protein bL9 from Thermotoga sp. (strain RQ2).